Here is a 577-residue protein sequence, read N- to C-terminus: MLNRFRPARLVAQSSRCLPLTRARAGPLPVNNARTLATRAAAVNTKEPTERDNITTLSNGVRVASEDLPDAFSGVGVYIDAGSRYENDYVRGASHIMDRLAFKSTSTRTADEMLETVEKLGGNIQCASSRESMMYQAATFNKAIPTAVELMAETIRDPKLTDEELEGQIMTAQYEVNEIWSKAELILPELVHMAAFKDNTLGNPLLCPKERLDYINRDVIQTYRDAFYRPERLVVAFAGVPHERAVKLAEKYFGDMKASDAPGLSRTGSETSVDSLVSESSEASSESSSSSSDSSESSGGLLSKLFSPKAKKATPNPFLTRVPISTEDLTRPAHYTGGFLTLPSQPPPLNPNLPTFTHIQLAFEGLAISDDDIYALATLQTLLGGGGSFSAGGPGKGMYSRLYTNVLNQHGWVESCVAFNHSYTDSGLFGIAASCYPGRTLPMLQVMCRELHALTTDHGYSALGELEVSRAKNQLRSSLLMNLESRMVELEDLGRQVQVHGRKIPVREMTRRINELTVKDLRRVAKRVVGGMANNAGQGSGAPTVVLQEATVQGLKTTELGWDQIQDTIAQWKLGRR.

The transit peptide at 1–35 (MLNRFRPARLVAQSSRCLPLTRARAGPLPVNNART) directs the protein to the mitochondrion. The tract at residues 259 to 301 (SDAPGLSRTGSETSVDSLVSESSEASSESSSSSSDSSESSGGL) is disordered. Over residues 269–301 (SETSVDSLVSESSEASSESSSSSSDSSESSGGL) the composition is skewed to low complexity.

It belongs to the peptidase M16 family. In terms of assembly, heterodimer of mpp (alpha) and pep (beta) subunits, forming the mitochondrial processing protease (MPP) in which mpp is involved in substrate recognition and binding and pep is the catalytic subunit.

It is found in the mitochondrion matrix. Its function is as follows. Substrate recognition and binding subunit of the essential mitochondrial processing protease (MPP), which cleaves the mitochondrial sequence off newly imported precursors proteins. The chain is Mitochondrial-processing peptidase subunit alpha from Neurospora crassa (strain ATCC 24698 / 74-OR23-1A / CBS 708.71 / DSM 1257 / FGSC 987).